A 289-amino-acid polypeptide reads, in one-letter code: Ribosomal RNA small subunit methyltransferase I (289 aa).

The protein belongs to the methyltransferase superfamily. RsmI family.

The protein resides in the cytoplasm. The enzyme catalyses cytidine(1402) in 16S rRNA + S-adenosyl-L-methionine = 2'-O-methylcytidine(1402) in 16S rRNA + S-adenosyl-L-homocysteine + H(+). In terms of biological role, catalyzes the 2'-O-methylation of the ribose of cytidine 1402 (C1402) in 16S rRNA. In Helicobacter pylori (strain J99 / ATCC 700824) (Campylobacter pylori J99), this protein is Ribosomal RNA small subunit methyltransferase I.